We begin with the raw amino-acid sequence, 193 residues long: Acyl carrier protein phosphodiesterase (193 aa).

It belongs to the AcpH family.

It catalyses the reaction holo-[ACP] + H2O = apo-[ACP] + (R)-4'-phosphopantetheine + H(+). Functionally, converts holo-ACP to apo-ACP by hydrolytic cleavage of the phosphopantetheine prosthetic group from ACP. This is Acyl carrier protein phosphodiesterase from Salmonella dublin (strain CT_02021853).